The sequence spans 284 residues: 8-methylmenaquinol:fumarate reductase membrane anchor subunit (284 aa).

As to quaternary structure, the MFR complex is composed of three subunits: a flavoprotein (SdhA), an iron-sulfur protein (SdhB), and one hydrophobic anchor protein (SdhE).

It is found in the periplasm. The protein resides in the cell membrane. It catalyses the reaction 8-methylmenaquinone-6 + succinate = 8-methylmenaquinol-6 + fumarate. Its function is as follows. Membrane anchor subunit of 8-methylmenaquinol:fumarate reductase (MFR), that catalyzes the reduction of fumarate using 8-methylmenaquinol-6 as electron donor. The complex shows no succinate oxidation activity. Is involved in anaerobic metabolism. SdhE likely contains the quinol/quinone binding site. The protein is 8-methylmenaquinol:fumarate reductase membrane anchor subunit of Wolinella succinogenes (strain ATCC 29543 / DSM 1740 / CCUG 13145 / JCM 31913 / LMG 7466 / NCTC 11488 / FDC 602W) (Vibrio succinogenes).